The primary structure comprises 628 residues: MSTETLQKETLGFQAEVKQLLQLMIHSLYSNKEIVLRELISNASDAADKLRFEALADNSLYGNDSDLKIRVSFDKQARTITISDNGIGMSREEVINNIGTIAKSGTKEFLQSLTGDQAKDANLIGQFGVGFYSAFIIADKVTLTTRRAGSNEAVRWESTGEGDYTLEPAEKESRGTDIVLHLREGEDEFLNDWKLKSIIRKYSDHITLPIVMKKSEWKDGEQVPTDEDETVNKASALWARNKSDISEQEYQEFYKHVSHDFENPLTWSHNRVEGKQEYISLLYIPSKAPFDLYDRERQHGIKLYVKRVFIMDDAEQLMPQYLRFVRGVIDSADLPLNVSREILQHSKDIEAIKTASVKRVLSMLEDLAENKPEEYAKFWKEFGRVLKEGPGEDFANKERIAGLLRFASTHADTDEQVVSFKDYIARMKEGQEAIYYITADSFAAAKHSPHLEIFRKKGIEVLLLSDRVDEWLVSSLTEFDGKKLQSVAKGDLDLGKLEDEAEKEQQKKTEDEYKPLVERIQAALGDSVKEVRVTHRLTDSPACLVAGEHDLSGNLERLLKAAGQKTPGSKPILEINPDHGIVQRLKDVTDEAKFADWAHLLFDQALLAEGGQLEDPAAFVRRVNAMLA.

The a; substrate-binding stretch occupies residues methionine 1–arginine 340. Residues glutamate 341–arginine 557 are b. The interval leucine 558–alanine 628 is c.

Belongs to the heat shock protein 90 family. In terms of assembly, homodimer.

Its subcellular location is the cytoplasm. Its function is as follows. Molecular chaperone. Has ATPase activity. The protein is Chaperone protein HtpG of Methylobacillus flagellatus (strain ATCC 51484 / DSM 6875 / VKM B-1610 / KT).